The primary structure comprises 733 residues: ATP-dependent RNA helicase DBP7 (733 aa).

2 disordered regions span residues 1 to 92 (MDED…SKMI) and 119 to 139 (SSQL…SNAP). Over residues 17 to 30 (SVSSGSNKRTTSKV) the composition is skewed to polar residues. Residues 52–80 (QKKDRSATGKDDGKKHENDESNDSKKRPT) show a composition bias toward basic and acidic residues. A Q motif motif is present at residues 144–173 (STFEGLGINERLSKHLTETLRFKNPTKVQK). A Helicase ATP-binding domain is found at 177-372 (PTMLSTERDL…SIILNNPEMI (196 aa)). 190 to 197 (AQTGSGKT) lines the ATP pocket. Positions 304–307 (DEGD) match the DEAD box motif. In terms of domain architecture, Helicase C-terminal spans 406–596 (TLSAILKKIS…NYENYLKDGF (191 aa)). A disordered region spans residues 687–714 (KKLGKSVESNSGIQGASKKTKKEDPRKK).

The protein belongs to the DEAD box helicase family. DDX31/DBP7 subfamily.

Its subcellular location is the nucleus. The protein resides in the nucleolus. The enzyme catalyses ATP + H2O = ADP + phosphate + H(+). ATP-binding RNA helicase involved in the biogenesis of 60S ribosomal subunits and is required for the normal formation of 25S and 5.8S rRNAs. This is ATP-dependent RNA helicase DBP7 (DPB7) from Scheffersomyces stipitis (strain ATCC 58785 / CBS 6054 / NBRC 10063 / NRRL Y-11545) (Yeast).